The following is a 316-amino-acid chain: Remorin 4.1 (316 aa).

3 disordered regions span residues 1-108, 125-202, and 267-287; these read MLSE…PSEL, NANA…SVGQ, and AQNE…SAEA. The segment covering 40-53 has biased composition (acidic residues); that stretch reads EREEEVVVEEELEE. Residues 92 to 104 are compositionally biased toward polar residues; that stretch reads RHTSIRSVGSDTA. Positions 125 to 135 are enriched in low complexity; sequence NANAAAAAAAN. Composition is skewed to basic and acidic residues over residues 143–153 and 277–287; these read GVDDALGRIGE and KAEEKRASAEA. Positions 242–288 form a coiled coil; that stretch reads VEKANAWLKKYERKLEEKRAKAMEKAQNEVAKARRKAEEKRASAEAK.

This sequence belongs to the remorin family. As to quaternary structure, interacts with BAK1. Phosphorylated by BRI1. Phosphorylation reduces the binding affinity to BAK1. As to expression, expressed in roots, leaf blades and leaf sheaths. Expressed at low levels in stems and spikelets.

It is found in the cell membrane. Functionally, functions in abscisic acid (ABA) signaling downstream of BZIP23. Acts as antagonistic and negative regulator of brassinosteroid (BR) signaling. Binds to BAK1 and inhibits its interaction with the BR receptor BRI1. Inhibits the formation and subsequent activation of the BRI1-BAK1 receptor complex. In Oryza sativa subsp. japonica (Rice), this protein is Remorin 4.1.